The sequence spans 285 residues: (3S)-malyl-CoA thioesterase (285 aa).

Substrate-binding residues include Arg-70 and Glu-122. Mg(2+) is bound by residues Glu-122 and Asp-148.

This sequence belongs to the HpcH/HpaI aldolase family. Homodimer or homotrimer. Mg(2+) serves as cofactor.

The enzyme catalyses (S)-malyl-CoA + H2O = (S)-malate + CoA + H(+). Functionally, catalyzes the hydrolysis of (3S)-malyl-CoA to (3S)-malate and free CoA. Inactive towards beta-methylmalyl-CoA and other CoA esters. The chain is (3S)-malyl-CoA thioesterase from Cereibacter sphaeroides (strain ATCC 17025 / ATH 2.4.3) (Rhodobacter sphaeroides).